The primary structure comprises 335 residues: Flagellar P-ring protein (335 aa).

Residues 1 to 17 form the signal peptide; that stretch reads MNKPMLMLITFATSLLA.

This sequence belongs to the FlgI family. The basal body constitutes a major portion of the flagellar organelle and consists of four rings (L,P,S, and M) mounted on a central rod.

It localises to the periplasm. The protein localises to the bacterial flagellum basal body. Functionally, assembles around the rod to form the L-ring and probably protects the motor/basal body from shearing forces during rotation. This chain is Flagellar P-ring protein, found in Borreliella burgdorferi (strain ZS7) (Borrelia burgdorferi).